A 147-amino-acid chain; its full sequence is UPF0306 protein YhbP (147 aa).

This sequence belongs to the UPF0306 family.

The protein is UPF0306 protein YhbP of Escherichia coli (strain SMS-3-5 / SECEC).